A 456-amino-acid chain; its full sequence is Probable glycine dehydrogenase (decarboxylating) subunit 1 (456 aa).

The protein belongs to the GcvP family. N-terminal subunit subfamily. In terms of assembly, the glycine cleavage system is composed of four proteins: P, T, L and H. In this organism, the P 'protein' is a heterodimer of two subunits.

It catalyses the reaction N(6)-[(R)-lipoyl]-L-lysyl-[glycine-cleavage complex H protein] + glycine + H(+) = N(6)-[(R)-S(8)-aminomethyldihydrolipoyl]-L-lysyl-[glycine-cleavage complex H protein] + CO2. Its function is as follows. The glycine cleavage system catalyzes the degradation of glycine. The P protein binds the alpha-amino group of glycine through its pyridoxal phosphate cofactor; CO(2) is released and the remaining methylamine moiety is then transferred to the lipoamide cofactor of the H protein. The chain is Probable glycine dehydrogenase (decarboxylating) subunit 1 from Legionella pneumophila (strain Paris).